The following is a 559-amino-acid chain: ADP,ATP carrier protein 1 (559 aa).

A compositionally biased stretch (polar residues) spans 1–10 (MNEVENNNHS). The tract at residues 1–22 (MNEVENNNHSFPREDIPTEDEI) is disordered. A glycan (N-linked (GlcNAc...) asparagine) is linked at N8. The next 4 membrane-spanning stretches (helical) occupy residues 46 to 66 (FALL…MRIL), 79 to 99 (TILF…VFLI), 111 to 131 (IFSI…AVFL), and 174 to 194 (IVFI…FLSF). Residue N196 is glycosylated (N-linked (GlcNAc...) asparagine). Helical transmembrane passes span 210–230 (PLII…GAFF) and 242–262 (QVLL…VIFL). N290 carries N-linked (GlcNAc...) asparagine glycosylation. The next 3 helical transmembrane spans lie at 305-325 (LLLA…MVES), 354-373 (QYMT…SSYV), and 377-397 (GFLL…VLFL). N403 carries N-linked (GlcNAc...) asparagine glycosylation. A run of 3 helical transmembrane segments spans residues 425 to 447 (YVLE…YSAF), 473 to 493 (IFGK…FEAL), and 503 to 523 (PITA…IIYL).

It belongs to the ADP/ATP translocase tlc family.

The protein resides in the cell membrane. ATP transporter involved in the uptake of ATP from the host cell cytoplasm. Provides the microsporidian cell with host ATP in exchange for ADP. This is an obligate exchange system. This energy acquiring activity is an important component of microsporidian parasitism. This chain is ADP,ATP carrier protein 1 (NTT1), found in Encephalitozoon cuniculi (strain GB-M1) (Microsporidian parasite).